Reading from the N-terminus, the 418-residue chain is Tyrosine--tRNA ligase (418 aa).

Positions 42 to 51 (PTAPDLHLGH) match the 'HIGH' region motif. The short motif at 226-230 (KMSKS) is the 'KMSKS' region element. Lys-229 is a binding site for ATP. The S4 RNA-binding domain maps to 339–400 (VRLVALLTKS…GKRNFAKVRL (62 aa)).

This sequence belongs to the class-I aminoacyl-tRNA synthetase family. TyrS type 2 subfamily. As to quaternary structure, homodimer.

It localises to the cytoplasm. The enzyme catalyses tRNA(Tyr) + L-tyrosine + ATP = L-tyrosyl-tRNA(Tyr) + AMP + diphosphate + H(+). Catalyzes the attachment of tyrosine to tRNA(Tyr) in a two-step reaction: tyrosine is first activated by ATP to form Tyr-AMP and then transferred to the acceptor end of tRNA(Tyr). The chain is Tyrosine--tRNA ligase from Xylella fastidiosa (strain 9a5c).